Reading from the N-terminus, the 467-residue chain is Acyl-lipid (8-3)-desaturase B (467 aa).

One can recognise a Cytochrome b5 heme-binding domain in the interval 12 to 89 (LKLYTWDEVS…IKQYEIGYIS (78 aa)). Residues H47 and H70 each coordinate heme. A run of 2 helical transmembrane segments spans residues 123 to 143 (VSVGVFTRMVLIYLFLFVTYY) and 152 to 172 (FWLNCIFAVLYGVANSLFGLH). The short motif at 175-179 (HDACH) is the Histidine box-1 element. The chain crosses the membrane as a helical span at residues 187-207 (MTWKILGATFDLFAGASFYAW). The Histidine box-2 motif lies at 211 to 216 (HVIGHH). Helical transmembrane passes span 293–313 (AIFILGKLVFIISRFILPLIY) and 317–337 (FSHLICFFLISELVLGWYLAI). The short motif at 400 to 404 (QVIHH) is the Histidine box-3 element.

Belongs to the fatty acid desaturase type 1 family. The cofactor is Fe(2+).

It localises to the membrane. The catalysed reaction is an (8Z,11Z,14Z)-icosatrienoyl-containing glycerolipid + 2 Fe(II)-[cytochrome b5] + O2 + 2 H(+) = (5Z,8Z,11Z,14Z)-eicosatetraenoyl-containing glycerolipid + 2 Fe(III)-[cytochrome b5] + 2 H2O. It carries out the reaction an (8Z,11Z,14Z,17Z)-eicosatetraenoyl-containing glycerolipid + 2 Fe(II)-[cytochrome b5] + O2 + 2 H(+) = a (5Z,8Z,11Z,14Z,17Z)-eicosapentaenoyl-containing glycerolipid + 2 Fe(III)-[cytochrome b5] + 2 H2O. Functionally, fatty acid desaturase that introduces a cis double bond at the 5-position in 18-carbon polyunsaturated fatty acids. This is Acyl-lipid (8-3)-desaturase B (fadB) from Dictyostelium discoideum (Social amoeba).